A 365-amino-acid chain; its full sequence is Histidinol-phosphate aminotransferase (365 aa).

A disordered region spans residues 1-23; it reads MSRPVPNPGILDIAPYTPGKSPV. An N6-(pyridoxal phosphate)lysine modification is found at Lys-221.

This sequence belongs to the class-II pyridoxal-phosphate-dependent aminotransferase family. Histidinol-phosphate aminotransferase subfamily. Homodimer. The cofactor is pyridoxal 5'-phosphate.

It catalyses the reaction L-histidinol phosphate + 2-oxoglutarate = 3-(imidazol-4-yl)-2-oxopropyl phosphate + L-glutamate. It functions in the pathway amino-acid biosynthesis; L-histidine biosynthesis; L-histidine from 5-phospho-alpha-D-ribose 1-diphosphate: step 7/9. The protein is Histidinol-phosphate aminotransferase of Rhodopseudomonas palustris (strain BisB18).